A 423-amino-acid chain; its full sequence is MSFQIPRGTQDILPEQAAKWQYIEHIARELCRRYNYQEIRTPIFEHTELFLRGVGDTTDIVQKEMYTFEDRGGRSLTLRPEGTAAVVRSFVENKMYGDPNQPVKLYYMGPMFRYERPQAGRFRQFVQFGVEALGSNDPAIDAEVIALAMDIYRMLGLKKLKLVINSLGDVESRKAHRQALIDHFQPRIHEFCDDCQARLHKNPMRILDCKKDRDHELMRTAPSILDYLNEQSRTYFEKVQMYLQKLGIAFEVDSRLVRGLDYYNHTAFEIMSEAEGFGAITTLCGGGRYNGLVQEIGGPETPGIGFALSIERLLAALEAEGISLPISEGIDCYVVALGEQAKEEAVALVAALRKEGISAEKDYQDRKVKAQLKAADRLHATYVAILGEDELQKGVINVKHMATGEQQEVSLHTFISHMKHVLQ.

Belongs to the class-II aminoacyl-tRNA synthetase family. Homodimer.

Its subcellular location is the cytoplasm. The enzyme catalyses tRNA(His) + L-histidine + ATP = L-histidyl-tRNA(His) + AMP + diphosphate + H(+). The chain is Histidine--tRNA ligase from Anoxybacillus flavithermus (strain DSM 21510 / WK1).